Reading from the N-terminus, the 254-residue chain is tRNA (guanine-N(1)-)-methyltransferase (254 aa).

Residues glycine 112 and 131 to 136 (IGDFIL) each bind S-adenosyl-L-methionine.

The protein belongs to the RNA methyltransferase TrmD family. In terms of assembly, homodimer.

The protein localises to the cytoplasm. The enzyme catalyses guanosine(37) in tRNA + S-adenosyl-L-methionine = N(1)-methylguanosine(37) in tRNA + S-adenosyl-L-homocysteine + H(+). Its function is as follows. Specifically methylates guanosine-37 in various tRNAs. In Persephonella marina (strain DSM 14350 / EX-H1), this protein is tRNA (guanine-N(1)-)-methyltransferase.